We begin with the raw amino-acid sequence, 1324 residues long: Coiled-coil domain-containing protein 171 (1324 aa).

5 coiled-coil regions span residues Lys-29–His-296, Ala-325–Tyr-393, Phe-453–Asp-521, Ser-599–Asn-712, and Phe-981–Val-1145. Positions Pro-1301–Val-1312 are enriched in polar residues. The tract at residues Pro-1301 to Leu-1324 is disordered.

The polypeptide is Coiled-coil domain-containing protein 171 (Ccdc171) (Mus musculus (Mouse)).